Reading from the N-terminus, the 342-residue chain is S-adenosylmethionine:tRNA ribosyltransferase-isomerase (342 aa).

It belongs to the QueA family. As to quaternary structure, monomer.

Its subcellular location is the cytoplasm. The enzyme catalyses 7-aminomethyl-7-carbaguanosine(34) in tRNA + S-adenosyl-L-methionine = epoxyqueuosine(34) in tRNA + adenine + L-methionine + 2 H(+). Its pathway is tRNA modification; tRNA-queuosine biosynthesis. Functionally, transfers and isomerizes the ribose moiety from AdoMet to the 7-aminomethyl group of 7-deazaguanine (preQ1-tRNA) to give epoxyqueuosine (oQ-tRNA). This Campylobacter jejuni subsp. jejuni serotype O:2 (strain ATCC 700819 / NCTC 11168) protein is S-adenosylmethionine:tRNA ribosyltransferase-isomerase.